A 73-amino-acid polypeptide reads, in one-letter code: Large ribosomal subunit protein bL31 (73 aa).

Belongs to the bacterial ribosomal protein bL31 family. Type A subfamily. In terms of assembly, part of the 50S ribosomal subunit.

Its function is as follows. Binds the 23S rRNA. The protein is Large ribosomal subunit protein bL31 of Brucella abortus (strain 2308).